Consider the following 322-residue polypeptide: Phospho-N-acetylmuramoyl-pentapeptide-transferase (322 aa).

10 consecutive transmembrane segments (helical) span residues 9–29 (IALVSSLVLTVIFLPVLINFM), 54–74 (TMGGTIFVIAAVISVIWVAAW), 82–102 (VWILVISLLGYGIIGFLDDGI), 122–142 (IIIAVVIVLIASSDHFQFGLY), 145–165 (FAGVVHSIALFTIFIIFWLVG), 176–196 (LDGLATGLSIVAYGTYAYIAF), 200–220 (NFAVLAFCMSVIGGLIAFFIF), 227–247 (IFMGDAGSLALGGGLATVSIM), 255–275 (LLIGIVFVCETASVILQVISF), and 302–322 (VDIVFWLVGLICSILYLAIWG).

This sequence belongs to the glycosyltransferase 4 family. MraY subfamily. The cofactor is Mg(2+).

The protein resides in the cell membrane. It carries out the reaction UDP-N-acetyl-alpha-D-muramoyl-L-alanyl-gamma-D-glutamyl-L-lysyl-D-alanyl-D-alanine + di-trans,octa-cis-undecaprenyl phosphate = Mur2Ac(oyl-L-Ala-gamma-D-Glu-L-Lys-D-Ala-D-Ala)-di-trans,octa-cis-undecaprenyl diphosphate + UMP. It participates in cell wall biogenesis; peptidoglycan biosynthesis. Its function is as follows. Catalyzes the initial step of the lipid cycle reactions in the biosynthesis of the cell wall peptidoglycan: transfers peptidoglycan precursor phospho-MurNAc-pentapeptide from UDP-MurNAc-pentapeptide onto the lipid carrier undecaprenyl phosphate, yielding undecaprenyl-pyrophosphoryl-MurNAc-pentapeptide, known as lipid I. This is Phospho-N-acetylmuramoyl-pentapeptide-transferase from Lactobacillus acidophilus (strain ATCC 700396 / NCK56 / N2 / NCFM).